A 407-amino-acid chain; its full sequence is Proteasome-activating nucleotidase (407 aa).

Residues 22-67 (KEKTQIAELESKVLRLELKNKDISRENVQIKKENEILKRELDKLRI) adopt a coiled-coil conformation. ATP-binding positions include 192 to 197 (GTGKTL) and histidine 331. Residues 405–407 (MYG) are docks into pockets in the proteasome alpha-ring to cause gate opening.

The protein belongs to the AAA ATPase family. As to quaternary structure, homohexamer. The hexameric complex has a two-ring architecture resembling a top hat that caps the 20S proteasome core at one or both ends. Upon ATP-binding, the C-terminus of PAN interacts with the alpha-rings of the proteasome core by binding to the intersubunit pockets.

The protein resides in the cytoplasm. Functionally, ATPase which is responsible for recognizing, binding, unfolding and translocation of substrate proteins into the archaeal 20S proteasome core particle. Is essential for opening the gate of the 20S proteasome via an interaction with its C-terminus, thereby allowing substrate entry and access to the site of proteolysis. Thus, the C-termini of the proteasomal ATPase function like a 'key in a lock' to induce gate opening and therefore regulate proteolysis. Unfolding activity requires energy from ATP hydrolysis, whereas ATP binding alone promotes ATPase-20S proteasome association which triggers gate opening, and supports translocation of unfolded substrates. The sequence is that of Proteasome-activating nucleotidase from Methanococcus maripaludis (strain C6 / ATCC BAA-1332).